The primary structure comprises 213 residues: 2,3-bisphosphoglycerate-dependent phosphoglycerate mutase (213 aa).

Substrate-binding positions include 8 to 15 (RHGQSEWN), 21 to 22 (TG), R58, 84 to 87 (ERNY), K95, 111 to 112 (RR), and 155 to 156 (GN). The Tele-phosphohistidine intermediate role is filled by H9. The Proton donor/acceptor role is filled by E84.

The protein belongs to the phosphoglycerate mutase family. BPG-dependent PGAM subfamily.

The enzyme catalyses (2R)-2-phosphoglycerate = (2R)-3-phosphoglycerate. Its pathway is carbohydrate degradation; glycolysis; pyruvate from D-glyceraldehyde 3-phosphate: step 3/5. Catalyzes the interconversion of 2-phosphoglycerate and 3-phosphoglycerate. The chain is 2,3-bisphosphoglycerate-dependent phosphoglycerate mutase from Cytophaga hutchinsonii (strain ATCC 33406 / DSM 1761 / CIP 103989 / NBRC 15051 / NCIMB 9469 / D465).